A 584-amino-acid polypeptide reads, in one-letter code: Long-chain-fatty-acid--AMP ligase FadD23 (584 aa).

A run of 2 helical transmembrane segments spans residues 199–219 (YFAD…WLPF) and 225–245 (LVLG…TSPV).

It belongs to the ATP-dependent AMP-binding enzyme family.

The protein localises to the membrane. The enzyme catalyses holo-[(hydroxy)phthioceranic acid synthase] + hexadecanoate + ATP = hexadecanoyl-[(hydroxy)phthioceranic acid synthase] + AMP + diphosphate. It catalyses the reaction holo-[(hydroxy)phthioceranic acid synthase] + octadecanoate + ATP = octadecanoyl-[(hydroxy)phthioceranic acid synthase] + AMP + diphosphate. Its pathway is lipid metabolism; fatty acid biosynthesis. In terms of biological role, catalyzes the activation of long-chain fatty acids as acyl-adenylates (acyl-AMP), which are then transferred to the multifunctional polyketide synthase (PKS) type III for further chain extension. Involved in the biosynthesis of sulfolipid 1 (SL-1). This Mycobacterium bovis (strain ATCC BAA-935 / AF2122/97) protein is Long-chain-fatty-acid--AMP ligase FadD23 (fadD23).